An 81-amino-acid chain; its full sequence is Cytotoxin 2 (81 aa).

The first 21 residues, 1-21 (MKTLLLTLVVVTIVCLDLGYT), serve as a signal peptide directing secretion. Cystine bridges form between C24–C42, C35–C59, C63–C74, and C75–C80.

Belongs to the three-finger toxin family. Short-chain subfamily. Type IA cytotoxin sub-subfamily. Monomer in solution; Homodimer and oligomer in the presence of negatively charged lipids forming a pore with a size ranging between 20 and 30 Angstroms. Expressed by the venom gland.

The protein localises to the secreted. The protein resides in the target cell membrane. In terms of biological role, basic protein that binds to cell membrane and depolarizes cardiomyocytes. It also shows lytic activities, but 2-fold less important than that of CTX-A4. It binds to the integrin alpha-V/beta-3 (ITGAV/ITGB3) with a moderate affinity. It may interact with sulfatides in the cell membrane which induces pore formation and cell internalization and is responsible for cytotoxicity in cardiomyocytes. It may also target the mitochondrial membrane and induce mitochondrial swelling and fragmentation. This is Cytotoxin 2 from Naja atra (Chinese cobra).